The following is a 100-amino-acid chain: MHLTPREFDKLVIHMLSDVALKRKNKGLKLNHPEAVAVLSAYVLDGAREGKTVEEVMDGARSVLKADDVMDGVPDLLPLIQVEAVFSDGSRLVSLHNPIT.

It belongs to the urease gamma subunit family. Heterotrimer of UreA (gamma), UreB (beta) and UreC (alpha) subunits. Three heterotrimers associate to form the active enzyme.

The protein resides in the cytoplasm. It carries out the reaction urea + 2 H2O + H(+) = hydrogencarbonate + 2 NH4(+). It functions in the pathway nitrogen metabolism; urea degradation; CO(2) and NH(3) from urea (urease route): step 1/1. Functionally, disrupting the ure2 operon has no effect on urease activity or pathogen survival in BALB/c mice when administered orally. The polypeptide is Urease subunit gamma 2 (Brucella abortus (strain 2308)).